The sequence spans 183 residues: Apo-citrate lyase phosphoribosyl-dephospho-CoA transferase (183 aa).

It belongs to the CitX family.

The catalysed reaction is apo-[citrate lyase ACP] + 2'-(5''-triphospho-alpha-D-ribosyl)-3'-dephospho-CoA = holo-[citrate lyase ACP] + diphosphate. Transfers 2-(5''-triphosphoribosyl)-3'-dephosphocoenzyme-A on a serine residue to the apo-acyl carrier protein (gamma chain) of the citrate lyase to yield holo-acyl carrier protein. This is Apo-citrate lyase phosphoribosyl-dephospho-CoA transferase from Escherichia coli O7:K1 (strain IAI39 / ExPEC).